Reading from the N-terminus, the 88-residue chain is UPF0147 protein Ta0600 (88 aa).

This sequence belongs to the UPF0147 family.

The protein is UPF0147 protein Ta0600 of Thermoplasma acidophilum (strain ATCC 25905 / DSM 1728 / JCM 9062 / NBRC 15155 / AMRC-C165).